The following is a 351-amino-acid chain: Transaldolase (351 aa).

The active-site Schiff-base intermediate with substrate is Lys138.

Belongs to the transaldolase family. Type 2 subfamily.

Its subcellular location is the cytoplasm. The catalysed reaction is D-sedoheptulose 7-phosphate + D-glyceraldehyde 3-phosphate = D-erythrose 4-phosphate + beta-D-fructose 6-phosphate. The protein operates within carbohydrate degradation; pentose phosphate pathway; D-glyceraldehyde 3-phosphate and beta-D-fructose 6-phosphate from D-ribose 5-phosphate and D-xylulose 5-phosphate (non-oxidative stage): step 2/3. Functionally, transaldolase is important for the balance of metabolites in the pentose-phosphate pathway. The protein is Transaldolase of Neisseria gonorrhoeae (strain ATCC 700825 / FA 1090).